Here is a 229-residue protein sequence, read N- to C-terminus: Ribonuclease 3 (229 aa).

Residues 5-127 (LSRLERQLGY…LIGAIYLDAG (123 aa)) form the RNase III domain. E40 provides a ligand contact to Mg(2+). D44 is a catalytic residue. Residues D113 and E116 each coordinate Mg(2+). E116 is an active-site residue. The region spanning 154–224 (DPKTRLQEFL…AAAALIALGV (71 aa)) is the DRBM domain.

The protein belongs to the ribonuclease III family. As to quaternary structure, homodimer. It depends on Mg(2+) as a cofactor.

It localises to the cytoplasm. It carries out the reaction Endonucleolytic cleavage to 5'-phosphomonoester.. Functionally, digests double-stranded RNA. Involved in the processing of primary rRNA transcript to yield the immediate precursors to the large and small rRNAs (23S and 16S). Processes some mRNAs, and tRNAs when they are encoded in the rRNA operon. Processes pre-crRNA and tracrRNA of type II CRISPR loci if present in the organism. The protein is Ribonuclease 3 of Pseudomonas syringae pv. tomato (strain ATCC BAA-871 / DC3000).